The primary structure comprises 300 residues: GTPase Era (300 aa).

The 169-residue stretch at 4 to 172 (KSGFVALAGK…LEKIKEELPE (169 aa)) folds into the Era-type G domain. The interval 12-19 (GKPNVGKS) is G1. 12-19 (GKPNVGKS) lines the GTP pocket. The G2 stretch occupies residues 38 to 42 (QTTRN). The segment at 59–62 (DTPG) is G3. GTP-binding positions include 59 to 63 (DTPGI) and 121 to 124 (NKID). The tract at residues 121-124 (NKID) is G4. Positions 151-153 (ISA) are G5. The KH type-2 domain maps to 195-280 (IREKIFHLTR…YLDLNVKVKE (86 aa)).

It belongs to the TRAFAC class TrmE-Era-EngA-EngB-Septin-like GTPase superfamily. Era GTPase family. Monomer.

It is found in the cytoplasm. The protein resides in the cell inner membrane. Its function is as follows. An essential GTPase that binds both GDP and GTP, with rapid nucleotide exchange. Plays a role in 16S rRNA processing and 30S ribosomal subunit biogenesis and possibly also in cell cycle regulation and energy metabolism. This Thermotoga maritima (strain ATCC 43589 / DSM 3109 / JCM 10099 / NBRC 100826 / MSB8) protein is GTPase Era.